The primary structure comprises 240 residues: tRNA (guanine-N(1)-)-methyltransferase (240 aa).

Residues Gly110 and 129–134 (LGDFVL) contribute to the S-adenosyl-L-methionine site.

This sequence belongs to the RNA methyltransferase TrmD family. Homodimer.

The protein localises to the cytoplasm. The catalysed reaction is guanosine(37) in tRNA + S-adenosyl-L-methionine = N(1)-methylguanosine(37) in tRNA + S-adenosyl-L-homocysteine + H(+). Specifically methylates guanosine-37 in various tRNAs. This Clostridium botulinum (strain Langeland / NCTC 10281 / Type F) protein is tRNA (guanine-N(1)-)-methyltransferase.